The chain runs to 174 residues: NAD(P)H-quinone oxidoreductase subunit J, chloroplastic (174 aa).

It belongs to the complex I 30 kDa subunit family. In terms of assembly, NDH is composed of at least 16 different subunits, 5 of which are encoded in the nucleus.

It localises to the plastid. It is found in the chloroplast thylakoid membrane. The enzyme catalyses a plastoquinone + NADH + (n+1) H(+)(in) = a plastoquinol + NAD(+) + n H(+)(out). The catalysed reaction is a plastoquinone + NADPH + (n+1) H(+)(in) = a plastoquinol + NADP(+) + n H(+)(out). Functionally, NDH shuttles electrons from NAD(P)H:plastoquinone, via FMN and iron-sulfur (Fe-S) centers, to quinones in the photosynthetic chain and possibly in a chloroplast respiratory chain. The immediate electron acceptor for the enzyme in this species is believed to be plastoquinone. Couples the redox reaction to proton translocation, and thus conserves the redox energy in a proton gradient. The sequence is that of NAD(P)H-quinone oxidoreductase subunit J, chloroplastic from Mesostigma viride (Green alga).